Consider the following 722-residue polypeptide: Serine/threonine-protein kinase MARK2 (722 aa).

Residues 1–46 (MSSARTPLPTLNERDTEQPTLGHLDSKPSSKSNMLRGRNSATSADE) are disordered. Residues 27-45 (KPSSKSNMLRGRNSATSAD) show a composition bias toward polar residues. Residue Ser-40 is modified to Phosphoserine. In terms of domain architecture, Protein kinase spans 53–304 (YRLLKTIGKG…LEQIMKDRWM (252 aa)). Thr-58 is modified (phosphothreonine; by autocatalysis). Residues 59–67 (IGKGNFAKV) and Lys-82 each bind ATP. A phosphoserine; by CaMK1 mark is found at Ser-91, Ser-92, and Ser-93. Asp-175 serves as the catalytic Proton acceptor. Thr-208 carries the post-translational modification Phosphothreonine; by LKB1 and TAOK1. Ser-212 carries the post-translational modification Phosphoserine; by GSK3-beta. Ser-274 bears the Phosphoserine; by autocatalysis mark. The residue at position 275 (Thr-275) is a Phosphothreonine; by autocatalysis. Thr-294 is subject to Phosphothreonine; by CaMK1. One can recognise a UBA domain in the interval 323 to 362 (YKDPRRTELMVSMGYTREEIQDSLVGQRYNEVMATYLLLG). A disordered region spans residues 373–576 (ITLKPRPSAD…SQGRRGASGS (204 aa)). Phosphoserine occurs at positions 408 and 409. Residues 417-431 (PTSNSYSKKTQSNNA) are compositionally biased toward polar residues. Positions 432–442 (ENKRPEEETGR) are enriched in basic and acidic residues. Position 453 is a phosphoserine (Ser-453). Thr-464 bears the Phosphothreonine mark. The span at 464–483 (TPTPSTNSVLSTSTNRSRNS) shows a compositional bias: polar residues. Ser-483 and Ser-490 each carry phosphoserine. The segment covering 492 to 505 (GQASIQNGKDSTAP) has biased composition (polar residues). Over residues 511 to 524 (ASPSAHNISSSSGA) the composition is skewed to low complexity. Phosphoserine is present on residues Ser-512, Ser-514, and Ser-535. A Phosphothreonine; by PKC/PRKCZ modification is found at Thr-539. Phosphoserine occurs at positions 562 and 656. A KA1 domain is found at 673 to 722 (TPGHENFVQWEMEVCKLPRLSLNGVRFKRISGTSMAFKNIASKIANELKL).

It belongs to the protein kinase superfamily. CAMK Ser/Thr protein kinase family. SNF1 subfamily. Homodimer. Interacts (when phosphorylated at Thr-539) with YWHAZ. Interacts with MTCL1; the interaction is direct and increases MARK2 microtubule-binding ability. Interacts with PAK5; leading to inhibit the protein kinase activity. Interacts with MAPT/TAU. Interacts with YWHAB, YWHAG and YWHAQ. Mg(2+) is required as a cofactor. Autophosphorylated. Phosphorylated at Thr-208 by STK11/LKB1 in complex with STE20-related adapter-alpha (STRADA) pseudo kinase and CAB39. Phosphorylation at Thr-208 by TAOK1 activates the kinase activity, leading to phosphorylation and detachment of MAPT/TAU from microtubules. Phosphorylation at Ser-212 by GSK3-beta (GSK3B) inhibits the kinase activity. Phosphorylation by CaMK1 promotes activity and is required to promote neurite outgrowth. Phosphorylation at Thr-539 by PRKCZ/aPKC in polarized epithelial cells inhibits the kinase activity and promotes binding to 14-3-3 protein YWHAZ, leading to relocation from cell membrane to cytoplasm.

Its subcellular location is the cell membrane. The protein localises to the lateral cell membrane. It is found in the cytoplasm. The protein resides in the cytoskeleton. It localises to the cell projection. Its subcellular location is the dendrite. It carries out the reaction L-seryl-[protein] + ATP = O-phospho-L-seryl-[protein] + ADP + H(+). The enzyme catalyses L-threonyl-[protein] + ATP = O-phospho-L-threonyl-[protein] + ADP + H(+). It catalyses the reaction L-seryl-[tau protein] + ATP = O-phospho-L-seryl-[tau protein] + ADP + H(+). The catalysed reaction is L-threonyl-[tau protein] + ATP = O-phospho-L-threonyl-[tau protein] + ADP + H(+). Inhibited by hymenialdisine. Activated by phosphorylation on Thr-208 by STK11/LKB1 and TAOK1. Inhibited by phosphorylation at Ser-212 or Thr-539. Inhibited by PAK5; inhibition is independent of the kinase activity of PAK5. Serine/threonine-protein kinase. Involved in cell polarity and microtubule dynamics regulation. Phosphorylates CRTC2/TORC2, DCX, HDAC7, KIF13B, MAP2, MAP4 and RAB11FIP2. Phosphorylates the microtubule-associated protein MAPT/TAU. Plays a key role in cell polarity by phosphorylating the microtubule-associated proteins MAP2, MAP4 and MAPT/TAU at KXGS motifs, causing detachment from microtubules, and their disassembly. Regulates epithelial cell polarity by phosphorylating RAB11FIP2. Involved in the regulation of neuronal migration through its dual activities in regulating cellular polarity and microtubule dynamics, possibly by phosphorylating and regulating DCX. Regulates axogenesis by phosphorylating KIF13B, promoting interaction between KIF13B and 14-3-3 and inhibiting microtubule-dependent accumulation of KIF13B. Also required for neurite outgrowth and establishment of neuronal polarity. Regulates localization and activity of some histone deacetylases by mediating phosphorylation of HDAC7, promoting subsequent interaction between HDAC7 and 14-3-3 and export from the nucleus. Also acts as a positive regulator of the Wnt signaling pathway, probably by mediating phosphorylation of dishevelled proteins (DVL1, DVL2 and/or DVL3). Modulates the developmental decision to build a columnar versus a hepatic epithelial cell apparently by promoting a switch from a direct to a transcytotic mode of apical protein delivery. Essential for the asymmetric development of membrane domains of polarized epithelial cells. This Rattus norvegicus (Rat) protein is Serine/threonine-protein kinase MARK2.